A 261-amino-acid chain; its full sequence is Methionine aminopeptidase (261 aa).

His78 is a binding site for substrate. A divalent metal cation-binding residues include Asp96, Asp107, and His170. His177 is a binding site for substrate. The a divalent metal cation site is built by Glu202 and Glu233.

This sequence belongs to the peptidase M24A family. Methionine aminopeptidase type 1 subfamily. As to quaternary structure, monomer. Requires Co(2+) as cofactor. Zn(2+) is required as a cofactor. The cofactor is Mn(2+). Fe(2+) serves as cofactor.

The enzyme catalyses Release of N-terminal amino acids, preferentially methionine, from peptides and arylamides.. Functionally, removes the N-terminal methionine from nascent proteins. The N-terminal methionine is often cleaved when the second residue in the primary sequence is small and uncharged (Met-Ala-, Cys, Gly, Pro, Ser, Thr, or Val). Requires deformylation of the N(alpha)-formylated initiator methionine before it can be hydrolyzed. The polypeptide is Methionine aminopeptidase (Buchnera aphidicola subsp. Schizaphis graminum (strain Sg)).